A 218-amino-acid polypeptide reads, in one-letter code: Octanoyltransferase (218 aa).

The BPL/LPL catalytic domain maps to 32–218 (GEAAEAIWLL…LRTFPQHFPD (187 aa)). Residues 71–78 (RGGQYTYH), 151–153 (AIG), and 164–166 (GLS) contribute to the substrate site. Cys182 functions as the Acyl-thioester intermediate in the catalytic mechanism.

Belongs to the LipB family.

The protein localises to the cytoplasm. It carries out the reaction octanoyl-[ACP] + L-lysyl-[protein] = N(6)-octanoyl-L-lysyl-[protein] + holo-[ACP] + H(+). It functions in the pathway protein modification; protein lipoylation via endogenous pathway; protein N(6)-(lipoyl)lysine from octanoyl-[acyl-carrier-protein]: step 1/2. In terms of biological role, catalyzes the transfer of endogenously produced octanoic acid from octanoyl-acyl-carrier-protein onto the lipoyl domains of lipoate-dependent enzymes. Lipoyl-ACP can also act as a substrate although octanoyl-ACP is likely to be the physiological substrate. The chain is Octanoyltransferase from Cereibacter sphaeroides (strain ATCC 17029 / ATH 2.4.9) (Rhodobacter sphaeroides).